Consider the following 322-residue polypeptide: Probable manganese-dependent inorganic pyrophosphatase (322 aa).

The Mn(2+) site is built by His10, Asp14, Asp16, Asp86, His108, and Asp160.

Belongs to the PPase class C family. It depends on Mn(2+) as a cofactor.

It localises to the cytoplasm. The catalysed reaction is diphosphate + H2O = 2 phosphate + H(+). The chain is Probable manganese-dependent inorganic pyrophosphatase (ppaC) from Archaeoglobus fulgidus (strain ATCC 49558 / DSM 4304 / JCM 9628 / NBRC 100126 / VC-16).